A 40-amino-acid polypeptide reads, in one-letter code: Fibrinolytic protease (40 aa).

The region spanning 1–40 (IVGGNEVTPHAYPWQVGLFIDDMYFCGGSISVTLTGWGKP) is the Peptidase S1 domain.

This sequence belongs to the peptidase S1 family.

Its subcellular location is the secreted. It localises to the extracellular space. Its function is as follows. Serine protease with fibrinolytic activity. This Euphausia superba (Antarctic krill) protein is Fibrinolytic protease.